Consider the following 294-residue polypeptide: Formate dehydrogenase, nitrate-inducible, iron-sulfur subunit (294 aa).

Over 1–256 the chain is Periplasmic; that stretch reads MAMETQDIIK…DTSVSLWKGA (256 aa). 4 consecutive 4Fe-4S ferredoxin-type domains span residues 30–58, 91–123, 124–153, and 158–189; these read VAKL…IRDE, LEWL…QYAN, GIVD…LNKE, and YKCT…FGTK. [4Fe-4S] cluster-binding residues include Cys39, Cys42, Cys45, Cys49, Cys100, Cys103, Cys108, Cys112, Cys133, Cys136, Cys139, Cys143, Cys160, Cys163, Cys175, and Cys179. Residues 257–279 traverse the membrane as a helical segment; that stretch reads LKPLAAAGFIATFAGLIFHYIGI. Residues 280 to 294 lie on the Cytoplasmic side of the membrane; sequence GPNKEVDDDEEDHHE.

Trimer of heterotrimers, consisting of subunits alpha, beta and gamma. Requires [4Fe-4S] cluster as cofactor.

It is found in the cell inner membrane. Formate dehydrogenase allows E.coli to use formate as major electron donor during anaerobic respiration, when nitrate is used as electron acceptor. The beta subunit FdnH is an electron transfer unit containing 4 iron-sulfur clusters; it serves as a conduit for electrons that are transferred from the formate oxidation site in the alpha subunit (FdnG) to the menaquinone associated with the gamma subunit (FdnI) of formate dehydrogenase-N. Formate dehydrogenase-N is part of a system that generates proton motive force, together with the dissimilatory nitrate reductase (Nar). The sequence is that of Formate dehydrogenase, nitrate-inducible, iron-sulfur subunit (fdnH) from Escherichia coli (strain K12).